A 191-amino-acid polypeptide reads, in one-letter code: Large ribosomal subunit protein uL6A (191 aa).

The protein belongs to the universal ribosomal protein uL6 family. As to quaternary structure, component of the large ribosomal subunit (LSU). Mature yeast ribosomes consist of a small (40S) and a large (60S) subunit. The 40S small subunit contains 1 molecule of ribosomal RNA (18S rRNA) and 33 different proteins (encoded by 57 genes). The large 60S subunit contains 3 rRNA molecules (25S, 5.8S and 5S rRNA) and 46 different proteins (encoded by 81 genes). uL6 lines the binding pocket for eukaryotic elongation factor 2 (eEF2).

The protein localises to the cytoplasm. Functionally, component of the ribosome, a large ribonucleoprotein complex responsible for the synthesis of proteins in the cell. The small ribosomal subunit (SSU) binds messenger RNAs (mRNAs) and translates the encoded message by selecting cognate aminoacyl-transfer RNA (tRNA) molecules. The large subunit (LSU) contains the ribosomal catalytic site termed the peptidyl transferase center (PTC), which catalyzes the formation of peptide bonds, thereby polymerizing the amino acids delivered by tRNAs into a polypeptide chain. The nascent polypeptides leave the ribosome through a tunnel in the LSU and interact with protein factors that function in enzymatic processing, targeting, and the membrane insertion of nascent chains at the exit of the ribosomal tunnel. This is Large ribosomal subunit protein uL6A from Saccharomyces cerevisiae (strain ATCC 204508 / S288c) (Baker's yeast).